We begin with the raw amino-acid sequence, 254 residues long: Bowman-Birk type bran trypsin inhibitor (254 aa).

The first 22 residues, 1-22 (MSNTTMATSTILLFLLAGLAAA), serve as a signal peptide directing secretion. Positions 23–118 (HGDGDTTIRL…KCTAALDGLS (96 aa)) are excised as a propeptide. 3 repeats span residues 46 to 120 (KPWD…LSME), 121 to 187 (RPWK…LCTP), and 188 to 251 (RPWG…CKPR). 10 cysteine pairs are disulfide-bonded: Cys-51/Cys-248, Cys-125/Cys-185, Cys-126/Cys-143, Cys-152/Cys-159, Cys-156/Cys-172, Cys-193/Cys-248, Cys-194/Cys-209, Cys-199/Cys-207, Cys-216/Cys-223, and Cys-220/Cys-236. The propeptide occupies 252–254 (AEN).

It belongs to the Bowman-Birk serine protease inhibitor family. As to expression, expressed in roots, leaves and flowers.

The sequence is that of Bowman-Birk type bran trypsin inhibitor (RBBI3.3) from Oryza sativa subsp. indica (Rice).